The sequence spans 80 residues: Acyl carrier protein (80 aa).

One can recognise a Carrier domain in the interval 4–79 (ANVEQKVKNI…DAVNYITTHK (76 aa)). Serine 39 carries the O-(pantetheine 4'-phosphoryl)serine modification.

Belongs to the acyl carrier protein (ACP) family. Post-translationally, 4'-phosphopantetheine is transferred from CoA to a specific serine of apo-ACP by AcpS. This modification is essential for activity because fatty acids are bound in thioester linkage to the sulfhydryl of the prosthetic group.

The protein localises to the cytoplasm. Its pathway is lipid metabolism; fatty acid biosynthesis. Its function is as follows. Carrier of the growing fatty acid chain in fatty acid biosynthesis. The protein is Acyl carrier protein of Anaeromyxobacter sp. (strain Fw109-5).